The chain runs to 665 residues: Intraflagellar transport protein 70A (665 aa).

TPR repeat units follow at residues 11-44 (DGEF…SPRS), 45-78 (RAGL…HPEL), 154-187 (TDGQ…SGYQ), 189-221 (DLSY…GIRQ), 393-424 (LTKQ…EKYI), 425-457 (PVLM…CNDH), and 459-492 (VWKL…HYDN). Residues 508-535 (YIMTSQNEEAEELMRKIEKEEEQLSYDD) adopt a coiled-coil conformation. One copy of the TPR 8 repeat lies at 544–577 (CIVNLVIGTLYCAKGNYEFGISRVIKSLEPYNKK).

This sequence belongs to the TTC30/dfy-1/fleer family.

The protein localises to the cell projection. Its subcellular location is the cilium. Functionally, required for polyglutamylation of axonemal tubulin. Plays a role in anterograde intraflagellar transport (IFT), the process by which cilia precursors are transported from the base of the cilium to the site of their incorporation at the tip. The polypeptide is Intraflagellar transport protein 70A (Homo sapiens (Human)).